The chain runs to 1118 residues: Phytochrome 1 (1118 aa).

A compositionally biased stretch (low complexity) spans 1–10 (MSSTRHSYSS). The segment at 1–23 (MSSTRHSYSSGGSGKSKHGRRIA) is disordered. A GAF domain is found at 212 to 391 (DIGLLCDSVV…VFSLQLNMEV (180 aa)). Cys317 contributes to the phytochromobilin binding site. PAS domains are found at residues 606–677 (VASE…LEGE) and 740–811 (DYKA…TKLM). One can recognise a Histidine kinase domain in the interval 887 to 1110 (YVKEELKKPL…LVTIQFPLAH (224 aa)).

The protein belongs to the phytochrome family. Homodimer. Contains one covalently linked phytochromobilin chromophore.

Its function is as follows. Regulatory photoreceptor which exists in two forms that are reversibly interconvertible by light: the Pr form that absorbs maximally in the red region of the spectrum and the Pfr form that absorbs maximally in the far-red region. Photoconversion of Pr to Pfr induces an array of morphogenic responses, whereas reconversion of Pfr to Pr cancels the induction of those responses. Pfr controls the expression of a number of nuclear genes including those encoding the small subunit of ribulose-bisphosphate carboxylase, chlorophyll A/B binding protein, protochlorophyllide reductase, rRNA, etc. It also controls the expression of its own gene(s) in a negative feedback fashion. This chain is Phytochrome 1 (PHY1), found in Adiantum capillus-veneris (Maidenhair fern).